Reading from the N-terminus, the 428-residue chain is Histidine--tRNA ligase (428 aa).

The protein belongs to the class-II aminoacyl-tRNA synthetase family. As to quaternary structure, homodimer.

It is found in the cytoplasm. It catalyses the reaction tRNA(His) + L-histidine + ATP = L-histidyl-tRNA(His) + AMP + diphosphate + H(+). The protein is Histidine--tRNA ligase of Azotobacter vinelandii (strain DJ / ATCC BAA-1303).